Here is a 492-residue protein sequence, read N- to C-terminus: Membrane-bound lytic murein transglycosylase F (492 aa).

The first 18 residues, 1–18, serve as a signal peptide directing secretion; that stretch reads MKGLFLRIIAIVALLLWA. The non-LT domain stretch occupies residues 19–268; the sequence is IDMVFPWQQI…RIEEKYFNHL (250 aa). The tract at residues 270–492 is LT domain; that stretch reads QFDYVDTRSY…DTLATTVTTQ (223 aa). Glu-313 is an active-site residue.

It in the N-terminal section; belongs to the bacterial solute-binding protein 3 family. In the C-terminal section; belongs to the transglycosylase Slt family.

Its subcellular location is the cell outer membrane. It carries out the reaction Exolytic cleavage of the (1-&gt;4)-beta-glycosidic linkage between N-acetylmuramic acid (MurNAc) and N-acetylglucosamine (GlcNAc) residues in peptidoglycan, from either the reducing or the non-reducing ends of the peptidoglycan chains, with concomitant formation of a 1,6-anhydrobond in the MurNAc residue.. Its function is as follows. Murein-degrading enzyme that degrades murein glycan strands and insoluble, high-molecular weight murein sacculi, with the concomitant formation of a 1,6-anhydromuramoyl product. Lytic transglycosylases (LTs) play an integral role in the metabolism of the peptidoglycan (PG) sacculus. Their lytic action creates space within the PG sacculus to allow for its expansion as well as for the insertion of various structures such as secretion systems and flagella. The polypeptide is Membrane-bound lytic murein transglycosylase F (Pasteurella multocida (strain Pm70)).